A 36-amino-acid chain; its full sequence is Protein YmgL (36 aa).

The protein is Protein YmgL of Escherichia coli (strain K12).